We begin with the raw amino-acid sequence, 652 residues long: Chaperone protein HtpG (652 aa).

Residues 1 to 348 (MATDAHKETL…SDDLPLNVSR (348 aa)) form an a; substrate-binding region. A b region spans residues 349–565 (ELLQHNPLLD…EYDFGMGMQR (217 aa)). The tract at residues 566–652 (LLKAAGHAMP…EAKSNAARGD (87 aa)) is c.

The protein belongs to the heat shock protein 90 family. Homodimer.

It is found in the cytoplasm. Its function is as follows. Molecular chaperone. Has ATPase activity. In Alkalilimnicola ehrlichii (strain ATCC BAA-1101 / DSM 17681 / MLHE-1), this protein is Chaperone protein HtpG.